Consider the following 143-residue polypeptide: UPF0047 protein MTH_771 (143 aa).

The protein belongs to the UPF0047 family.

This chain is UPF0047 protein MTH_771, found in Methanothermobacter thermautotrophicus (strain ATCC 29096 / DSM 1053 / JCM 10044 / NBRC 100330 / Delta H) (Methanobacterium thermoautotrophicum).